A 275-amino-acid polypeptide reads, in one-letter code: Translation initiation factor 2 subunit alpha (275 aa).

The region spanning 12-83 (GELVVATVKR…KKGHIDLSLR (72 aa)) is the S1 motif domain.

The protein belongs to the eIF-2-alpha family. Heterotrimer composed of an alpha, a beta and a gamma chain.

In terms of biological role, eIF-2 functions in the early steps of protein synthesis by forming a ternary complex with GTP and initiator tRNA. The chain is Translation initiation factor 2 subunit alpha from Pyrococcus furiosus (strain ATCC 43587 / DSM 3638 / JCM 8422 / Vc1).